The chain runs to 86 residues: Omega-theraphotoxin-Hhn1d (86 aa).

The first 21 residues, 1–21 (MKSIVFVALFGLALLAVVCSA), serve as a signal peptide directing secretion. The propeptide occupies 22-50 (SEDAHKELLKEVVRAMVVDKTDAVQAEER). Intrachain disulfides connect C52–C66, C59–C71, and C65–C78.

It belongs to the neurotoxin 10 (Hwtx-1) family. 17 (Hntx-9) subfamily. As to expression, expressed by the venom gland.

It is found in the secreted. Ion channel inhibitor. The protein is Omega-theraphotoxin-Hhn1d of Cyriopagopus hainanus (Chinese bird spider).